Consider the following 359-residue polypeptide: MEKLRVELGERSYEILIDRGNLSLIGERLLRFSISKKIGIISNPKVSELYGQKVISSLQKEGFEPFVILIPDGEHYKDYFWAYHILTQLLEFGFDRGSFLIALGGGVIGDITGFVASIYMRGISYIQIPTTLLAQVDSSVGGKTAVNHPLGKNMIGTFWQPSLVWIDVDTLESLPEREFISGLAEVIKYGVIWDKEFFEFLEINRTKILKKDKDILISIIKRACEIKAEVVSKDERESALRAILNYGHTIGHAIETLTGYSSYLHGEAISIGMVHEAKLSSMLGFLDKEDFEKIRNILKEFGLPVNLPINMDSSAMLKTILLDKKNIEGKIRMVIPDSIGKMKINFEISGEDLKKVLNE.

NAD(+) contacts are provided by residues 72 to 77, 106 to 110, 130 to 131, lysine 143, and lysine 152; these read DGEHYK, GVIGD, and TT. The Zn(2+) site is built by glutamate 185, histidine 248, and histidine 265.

This sequence belongs to the sugar phosphate cyclases superfamily. Dehydroquinate synthase family. Requires Co(2+) as cofactor. Zn(2+) is required as a cofactor. NAD(+) serves as cofactor.

The protein localises to the cytoplasm. The enzyme catalyses 7-phospho-2-dehydro-3-deoxy-D-arabino-heptonate = 3-dehydroquinate + phosphate. It participates in metabolic intermediate biosynthesis; chorismate biosynthesis; chorismate from D-erythrose 4-phosphate and phosphoenolpyruvate: step 2/7. Its function is as follows. Catalyzes the conversion of 3-deoxy-D-arabino-heptulosonate 7-phosphate (DAHP) to dehydroquinate (DHQ). The chain is 3-dehydroquinate synthase from Thermodesulfovibrio yellowstonii (strain ATCC 51303 / DSM 11347 / YP87).